Here is a 388-residue protein sequence, read N- to C-terminus: MNLHEYQAKQLFARYGLPAPAGYACTTPREAEEAASKIGSGPWVVKCQVHAGGRGKAGGVKVVNSKEEIRAFAEQWLGKRLVTYQTDAQGQPVRQILVEAATDIAKELYLGAVVDRGTRRVVFMASTEGGVEIEKVAEETPELIHKAIIDPLIGPMSYQGRELAFKLGLTGKQVSQFTKIFLGLANLFLERDLALVEINPLVITTQGDLICLDGKLGADGNALFRQAELREMHDPSQEDPREAQAAQWELNYVALDGNIGCMVNGAGLAMGTMDIVKLHGGAPANFLDVGGGATKERVTEAFKIILSDENVKAVLVNIFGGIVRCDLIADGIIGAVEEVGVHVPVVVRLEGNNAELGAKKLADSGLNIIAATSLTDAAKQAVAAVEAK.

Residues 9 to 244 enclose the ATP-grasp domain; the sequence is KQLFARYGLP…PSQEDPREAQ (236 aa). ATP-binding positions include Lys-46, 53-55, Glu-99, Thr-102, and Glu-107; that span reads GRG. Mg(2+) is bound by residues Asn-199 and Asp-213. Substrate contacts are provided by residues Asn-264 and 321–323; that span reads GIV.

The protein belongs to the succinate/malate CoA ligase beta subunit family. In terms of assembly, heterotetramer of two alpha and two beta subunits. It depends on Mg(2+) as a cofactor.

It carries out the reaction succinate + ATP + CoA = succinyl-CoA + ADP + phosphate. It catalyses the reaction GTP + succinate + CoA = succinyl-CoA + GDP + phosphate. It functions in the pathway carbohydrate metabolism; tricarboxylic acid cycle; succinate from succinyl-CoA (ligase route): step 1/1. Succinyl-CoA synthetase functions in the citric acid cycle (TCA), coupling the hydrolysis of succinyl-CoA to the synthesis of either ATP or GTP and thus represents the only step of substrate-level phosphorylation in the TCA. The beta subunit provides nucleotide specificity of the enzyme and binds the substrate succinate, while the binding sites for coenzyme A and phosphate are found in the alpha subunit. The polypeptide is Succinate--CoA ligase [ADP-forming] subunit beta (Photorhabdus laumondii subsp. laumondii (strain DSM 15139 / CIP 105565 / TT01) (Photorhabdus luminescens subsp. laumondii)).